The following is a 258-amino-acid chain: UPF0246 protein HS_0482 (258 aa).

It belongs to the UPF0246 family.

The polypeptide is UPF0246 protein HS_0482 (Histophilus somni (strain 129Pt) (Haemophilus somnus)).